A 68-amino-acid polypeptide reads, in one-letter code: Small ribosomal subunit protein bS21 (68 aa).

A disordered region spans residues 39 to 68 (PPSVKRVRKKQESERRHRKERAMRRRMMEE). Residues 54-68 (RHRKERAMRRRMMEE) are compositionally biased toward basic residues.

Belongs to the bacterial ribosomal protein bS21 family.

The protein is Small ribosomal subunit protein bS21 of Orientia tsutsugamushi (strain Ikeda) (Rickettsia tsutsugamushi).